A 281-amino-acid polypeptide reads, in one-letter code: Hydroxyethylthiazole kinase (281 aa).

The ATP site is built by R124 and S169.

It belongs to the Thz kinase family. It depends on Mg(2+) as a cofactor.

It catalyses the reaction 5-(2-hydroxyethyl)-4-methylthiazole + ATP = 4-methyl-5-(2-phosphooxyethyl)-thiazole + ADP + H(+). It functions in the pathway cofactor biosynthesis; thiamine diphosphate biosynthesis; 4-methyl-5-(2-phosphoethyl)-thiazole from 5-(2-hydroxyethyl)-4-methylthiazole: step 1/1. Catalyzes the phosphorylation of the hydroxyl group of 4-methyl-5-beta-hydroxyethylthiazole (THZ). In Rhodococcus erythropolis (strain PR4 / NBRC 100887), this protein is Hydroxyethylthiazole kinase.